A 188-amino-acid polypeptide reads, in one-letter code: Dual specificity protein phosphatase 18 (188 aa).

Residues 19 to 160 (GLSQITKSLY…LIHYEFQLFG (142 aa)) form the Tyrosine-protein phosphatase domain. C104 serves as the catalytic Phosphocysteine intermediate.

It belongs to the protein-tyrosine phosphatase family. Non-receptor class dual specificity subfamily. In terms of tissue distribution, widely expressed with highest levels in liver, brain, ovary and testis.

Its subcellular location is the cytoplasm. The protein resides in the nucleus. It is found in the mitochondrion inner membrane. It catalyses the reaction O-phospho-L-tyrosyl-[protein] + H2O = L-tyrosyl-[protein] + phosphate. The catalysed reaction is O-phospho-L-seryl-[protein] + H2O = L-seryl-[protein] + phosphate. The enzyme catalyses O-phospho-L-threonyl-[protein] + H2O = L-threonyl-[protein] + phosphate. Activated by manganese ions, inhibited by iodoacetic acid. Functionally, can dephosphorylate single and diphosphorylated synthetic MAPK peptides, with preference for the phosphotyrosine and diphosphorylated forms over phosphothreonine. In vitro, dephosphorylates p-nitrophenyl phosphate (pNPP). This is Dual specificity protein phosphatase 18 (DUSP18) from Homo sapiens (Human).